Consider the following 329-residue polypeptide: Transcription factor RAX1 (329 aa).

2 consecutive HTH myb-type domains span residues 9-62 and 63-117; these read KTKV…LNYL and RPNI…RKKL. DNA-binding regions (H-T-H motif) lie at residues 38–62 and 90–113; these read WISFPLKAGLRRCGKSCRLRWLNYL and WSIIAAHLPGRTDNDIKNYWNTKL. Composition is skewed to low complexity over residues 122–131 and 144–154; these read SDSSSSAMAS and PTSPTTIPSSS. Positions 122–162 are disordered; that stretch reads SDSSSSAMASPYLNPISQDVKRPTSPTTIPSSSYNPYAENP.

In terms of tissue distribution, mostly expressed in roots. Also present in shoot tips and flower buds.

It is found in the nucleus. Transcription activator of genes involved in the regulation of meristematic competence, such as CUC2. Positively regulates axillary meristems (AMs) formation and development, especially at early phases of vegetative growth, probably by specifying a stem cell niche for AM formation. Modulates the negative regulation mediated by gibberellic acid on the timing of developmental phase transitions. In Arabidopsis thaliana (Mouse-ear cress), this protein is Transcription factor RAX1 (RAX1).